We begin with the raw amino-acid sequence, 142 residues long: MYKAIIMPVDVFEMELSDKAVRHAEFLAQDDGVIHLLHVLPGSASLSLHRFAADVRRFEEHLQHEAEERLQTMVSHFTIDPSRIKQHVRFGSVRDEVNELAEELGADVVVIGSRNPSISTHLLGSNASSVIRHANLPVLVVR.

The protein belongs to the universal stress protein A family.

The polypeptide is Universal stress protein G (uspG) (Shigella flexneri).